Consider the following 172-residue polypeptide: uncharacterized protein (172 aa).

This is an uncharacterized protein from Pasteurella multocida (strain Pm70).